A 218-amino-acid chain; its full sequence is LexA repressor (218 aa).

The H-T-H motif DNA-binding region spans 31–51 (IREIQDGLRISSTSVVAYNLR). Residues Ser-137 and Lys-176 each act as for autocatalytic cleavage activity in the active site.

Belongs to the peptidase S24 family. In terms of assembly, homodimer.

The catalysed reaction is Hydrolysis of Ala-|-Gly bond in repressor LexA.. Functionally, represses a number of genes involved in the response to DNA damage (SOS response), including recA and lexA. In the presence of single-stranded DNA, RecA interacts with LexA causing an autocatalytic cleavage which disrupts the DNA-binding part of LexA, leading to derepression of the SOS regulon and eventually DNA repair. The chain is LexA repressor from Roseiflexus sp. (strain RS-1).